A 185-amino-acid polypeptide reads, in one-letter code: Elongation factor P (185 aa).

The protein belongs to the elongation factor P family.

Its subcellular location is the cytoplasm. Its pathway is protein biosynthesis; polypeptide chain elongation. Its function is as follows. Involved in peptide bond synthesis. Stimulates efficient translation and peptide-bond synthesis on native or reconstituted 70S ribosomes in vitro. Probably functions indirectly by altering the affinity of the ribosome for aminoacyl-tRNA, thus increasing their reactivity as acceptors for peptidyl transferase. The protein is Elongation factor P of Nitratidesulfovibrio vulgaris (strain DP4) (Desulfovibrio vulgaris).